A 154-amino-acid chain; its full sequence is Large ribosomal subunit protein uL22c (154 aa).

It belongs to the universal ribosomal protein uL22 family. As to quaternary structure, part of the 50S ribosomal subunit.

Its subcellular location is the plastid. The protein resides in the chloroplast. Functionally, this protein binds specifically to 23S rRNA. The globular domain of the protein is located near the polypeptide exit tunnel on the outside of the subunit, while an extended beta-hairpin is found that lines the wall of the exit tunnel in the center of the 70S ribosome. The sequence is that of Large ribosomal subunit protein uL22c (rpl22) from Guizotia abyssinica (Niger).